The sequence spans 443 residues: Threonine/serine transporter TdcC (443 aa).

11 consecutive transmembrane segments (helical) span residues 22-42, 44-64, 97-117, 140-160, 163-183, 207-227, 259-279, 319-339, 366-386, 389-409, and 423-443; these read TTWT…FFPI, AGFG…PIAF, GVVI…IYGV, FVAL…KDLM, VMSY…LSLI, ILVT…FSPI, ASML…FTLS, ASII…LGTL, ISMI…PNIL, IEAM…MYAI, and DNVF…YKLF.

It belongs to the amino acid/polyamine transporter 2 family. SdaC/TdcC subfamily.

It localises to the cell inner membrane. It catalyses the reaction L-threonine(in) + H(+)(in) = L-threonine(out) + H(+)(out). It carries out the reaction L-serine(in) + H(+)(in) = L-serine(out) + H(+)(out). In terms of biological role, involved in the import of threonine and serine into the cell, with the concomitant import of a proton (symport system). This Salmonella paratyphi B (strain ATCC BAA-1250 / SPB7) protein is Threonine/serine transporter TdcC.